A 322-amino-acid chain; its full sequence is Homoserine kinase (322 aa).

An ATP-binding site is contributed by 107-117 (PLSSGMGGSAA).

It belongs to the GHMP kinase family. Homoserine kinase subfamily.

Its subcellular location is the cytoplasm. The catalysed reaction is L-homoserine + ATP = O-phospho-L-homoserine + ADP + H(+). It participates in amino-acid biosynthesis; L-threonine biosynthesis; L-threonine from L-aspartate: step 4/5. Its function is as follows. Catalyzes the ATP-dependent phosphorylation of L-homoserine to L-homoserine phosphate. In Xylella fastidiosa (strain M23), this protein is Homoserine kinase.